A 404-amino-acid chain; its full sequence is Glycerol-1-phosphate dehydrogenase [NAD(P)+] (404 aa).

NAD(+)-binding positions include Asp-56, Gly-118–Asp-122, and Thr-140–Ser-143. Asp-145 serves as a coordination point for substrate. Residue Ser-149 coordinates NAD(+). Asp-192 serves as a coordination point for substrate. The Ni(2+) site is built by Asp-192 and His-272. Position 276 (His-276) interacts with substrate. Position 292 (His-292) interacts with Ni(2+).

It belongs to the glycerol-1-phosphate dehydrogenase family. Homodimer. It depends on Ni(2+) as a cofactor.

It localises to the cytoplasm. It catalyses the reaction sn-glycerol 1-phosphate + NAD(+) = dihydroxyacetone phosphate + NADH + H(+). The enzyme catalyses sn-glycerol 1-phosphate + NADP(+) = dihydroxyacetone phosphate + NADPH + H(+). Functionally, catalyzes the NAD(P)H-dependent reduction of dihydroxyacetonephosphate (DHAP or glycerone phosphate) to glycerol 1-phosphate (G1P). The G1P thus generated is probably used for the synthesis of phosphoglycerolipids in Gram-positive bacterial species. This Geobacillus stearothermophilus (Bacillus stearothermophilus) protein is Glycerol-1-phosphate dehydrogenase [NAD(P)+].